A 567-amino-acid polypeptide reads, in one-letter code: Phosphoglucomutase-like protein 5 (567 aa).

Residues 1–26 (MEGSPIPVLTVPTAPYEDQRPTGGGG) form a disordered region. Thr120 is modified (phosphothreonine). Phosphoserine is present on Ser122.

The protein belongs to the phosphohexose mutase family. As to quaternary structure, interacts with DMD/dystrophin; the interaction is direct. Interacts with UTRN/utrophin.

It is found in the cell junction. The protein resides in the adherens junction. It localises to the cytoplasm. The protein localises to the cytoskeleton. Its subcellular location is the cell membrane. It is found in the sarcolemma. Functionally, component of adherens-type cell-cell and cell-matrix junctions. Has no phosphoglucomutase activity in vitro. This chain is Phosphoglucomutase-like protein 5, found in Mus musculus (Mouse).